The primary structure comprises 232 residues: 5'-methylthioadenosine/S-adenosylhomocysteine nucleosidase (232 aa).

Glu14 acts as the Proton acceptor in catalysis. Substrate contacts are provided by residues Gly80, Val154, and 175–176 (ME). Asp199 (proton donor) is an active-site residue.

Belongs to the PNP/UDP phosphorylase family. MtnN subfamily.

The catalysed reaction is S-adenosyl-L-homocysteine + H2O = S-(5-deoxy-D-ribos-5-yl)-L-homocysteine + adenine. It carries out the reaction S-methyl-5'-thioadenosine + H2O = 5-(methylsulfanyl)-D-ribose + adenine. It catalyses the reaction 5'-deoxyadenosine + H2O = 5-deoxy-D-ribose + adenine. It participates in amino-acid biosynthesis; L-methionine biosynthesis via salvage pathway; S-methyl-5-thio-alpha-D-ribose 1-phosphate from S-methyl-5'-thioadenosine (hydrolase route): step 1/2. In terms of biological role, catalyzes the irreversible cleavage of the glycosidic bond in both 5'-methylthioadenosine (MTA) and S-adenosylhomocysteine (SAH/AdoHcy) to adenine and the corresponding thioribose, 5'-methylthioribose and S-ribosylhomocysteine, respectively. Also cleaves 5'-deoxyadenosine, a toxic by-product of radical S-adenosylmethionine (SAM) enzymes, into 5-deoxyribose and adenine. The protein is 5'-methylthioadenosine/S-adenosylhomocysteine nucleosidase of Haemophilus ducreyi (strain 35000HP / ATCC 700724).